A 207-amino-acid polypeptide reads, in one-letter code: Ribosomal RNA large subunit methyltransferase E (207 aa).

G60, W62, D80, D96, and D121 together coordinate S-adenosyl-L-methionine. K161 acts as the Proton acceptor in catalysis.

It belongs to the class I-like SAM-binding methyltransferase superfamily. RNA methyltransferase RlmE family.

It is found in the cytoplasm. It catalyses the reaction uridine(2552) in 23S rRNA + S-adenosyl-L-methionine = 2'-O-methyluridine(2552) in 23S rRNA + S-adenosyl-L-homocysteine + H(+). Functionally, specifically methylates the uridine in position 2552 of 23S rRNA at the 2'-O position of the ribose in the fully assembled 50S ribosomal subunit. The chain is Ribosomal RNA large subunit methyltransferase E from Methylobacillus flagellatus (strain ATCC 51484 / DSM 6875 / VKM B-1610 / KT).